We begin with the raw amino-acid sequence, 171 residues long: 3-hydroxydecanoyl-[acyl-carrier-protein] dehydratase (171 aa).

Histidine 70 is a catalytic residue.

Belongs to the thioester dehydratase family. FabA subfamily. As to quaternary structure, homodimer.

The protein resides in the cytoplasm. The catalysed reaction is a (3R)-hydroxyacyl-[ACP] = a (2E)-enoyl-[ACP] + H2O. It carries out the reaction (3R)-hydroxydecanoyl-[ACP] = (2E)-decenoyl-[ACP] + H2O. The enzyme catalyses (2E)-decenoyl-[ACP] = (3Z)-decenoyl-[ACP]. The protein operates within lipid metabolism; fatty acid biosynthesis. Its function is as follows. Necessary for the introduction of cis unsaturation into fatty acids. Catalyzes the dehydration of (3R)-3-hydroxydecanoyl-ACP to E-(2)-decenoyl-ACP and then its isomerization to Z-(3)-decenoyl-ACP. Can catalyze the dehydratase reaction for beta-hydroxyacyl-ACPs with saturated chain lengths up to 16:0, being most active on intermediate chain length. In Pseudomonas putida (strain GB-1), this protein is 3-hydroxydecanoyl-[acyl-carrier-protein] dehydratase.